The primary structure comprises 521 residues: MIKQALISVSDKTGIVDFAKSLSDLGVKLLSTGGTAKLLADAGLPVTEVADYTGFPEMLDGRVKTLHPKVHGGILARRDLPEHMQALEQHGIPTIDLLVVNLYPFVATIAKDDCTLADAIENIDIGGPTMLRSAAKNHRDVTVVVDPADYAVVLDEMKANGNTVGHPTNFRLATKVFAHTAQYDGAITNYLTSLTDELKHASRSTYPATLNLAFDKVQDLRYGENPHQSAAFYRDLATPAGALANYRQLQGKELSYNNIADSDAAWECVKTFDAPACVIIKHANPCGVAVGNDSADAYAKAFQTDPTSAFGGIIAFNREVDEAAAQAVAKQFVEVLIAPSFSDAAKQVFAAKQNVRLLEIALGDGHNAFDLKRVGGGLLVQSLDSRNVQPSELRVVTKRQPTAKEMDDLLFAWRVAKYVKSNAIVFCGNGMTLGVGAGQMSRVDSARIASIKAQNAGLTLAGSAVASDAFFPFRDGLDVVVAAGATCVIQPGGSMRDDEVIAAADEHGIAMVLTGVRHFRH.

The region spanning 1 to 145 (MIKQALISVS…KNHRDVTVVV (145 aa)) is the MGS-like domain.

It belongs to the PurH family.

The catalysed reaction is (6R)-10-formyltetrahydrofolate + 5-amino-1-(5-phospho-beta-D-ribosyl)imidazole-4-carboxamide = 5-formamido-1-(5-phospho-D-ribosyl)imidazole-4-carboxamide + (6S)-5,6,7,8-tetrahydrofolate. The enzyme catalyses IMP + H2O = 5-formamido-1-(5-phospho-D-ribosyl)imidazole-4-carboxamide. It participates in purine metabolism; IMP biosynthesis via de novo pathway; 5-formamido-1-(5-phospho-D-ribosyl)imidazole-4-carboxamide from 5-amino-1-(5-phospho-D-ribosyl)imidazole-4-carboxamide (10-formyl THF route): step 1/1. It functions in the pathway purine metabolism; IMP biosynthesis via de novo pathway; IMP from 5-formamido-1-(5-phospho-D-ribosyl)imidazole-4-carboxamide: step 1/1. In Burkholderia orbicola (strain AU 1054), this protein is Bifunctional purine biosynthesis protein PurH.